Reading from the N-terminus, the 168-residue chain is Gremlin-2 (168 aa).

The first 21 residues, 1–21 (MFWKLSLTLLLVAVLVKVAET), serve as a signal peptide directing secretion. The N-linked (GlcNAc...) asparagine glycan is linked to asparagine 40. Intrachain disulfides connect cysteine 73/cysteine 123, cysteine 87/cysteine 137, cysteine 97/cysteine 155, and cysteine 101/cysteine 157. One can recognise a CTCK domain in the interval 73 to 163 (CKTQPLRQTV…HCRCMSVNLS (91 aa)). Asparagine 161 carries N-linked (GlcNAc...) asparagine glycosylation.

This sequence belongs to the DAN family. Homodimer. Interacts with BMP2, BMP4 and BMP7, but has lower affinity for BMP7 than for BMP2 and BMP4. Binds heparin; this impairs the interaction with BMP2. N-glycosylated. In terms of tissue distribution, highly expressed in the ovary, followed by brain, spleen, colon, kidney and uterus. In ovary expressed in granulosa cells of selective early antral follicles.

Its subcellular location is the secreted. Cytokine that inhibits the activity of BMP2 and BMP4 in a dose-dependent manner, and thereby modulates signaling by BMP family members. Contributes to the regulation of embryonic morphogenesis via BMP family members. Antagonizes BMP4-induced suppression of progesterone production in granulosa cells. The chain is Gremlin-2 (Grem2) from Mus musculus (Mouse).